A 50-amino-acid polypeptide reads, in one-letter code: Sperm protamine P1 (50 aa).

It belongs to the protamine P1 family. As to expression, testis.

The protein localises to the nucleus. It is found in the chromosome. Protamines substitute for histones in the chromatin of sperm during the haploid phase of spermatogenesis. They compact sperm DNA into a highly condensed, stable and inactive complex. In Chilonatalus micropus (Cuban funnel-eared bat), this protein is Sperm protamine P1 (PRM1).